Reading from the N-terminus, the 70-residue chain is Large ribosomal subunit protein bL28c (70 aa).

This sequence belongs to the bacterial ribosomal protein bL28 family.

It is found in the plastid. Its subcellular location is the cyanelle. This Cyanophora paradoxa protein is Large ribosomal subunit protein bL28c (rpl28).